The following is a 473-amino-acid chain: Proline--tRNA ligase (473 aa).

This sequence belongs to the class-II aminoacyl-tRNA synthetase family. ProS type 3 subfamily. In terms of assembly, homodimer.

Its subcellular location is the cytoplasm. It carries out the reaction tRNA(Pro) + L-proline + ATP = L-prolyl-tRNA(Pro) + AMP + diphosphate. Catalyzes the attachment of proline to tRNA(Pro) in a two-step reaction: proline is first activated by ATP to form Pro-AMP and then transferred to the acceptor end of tRNA(Pro). The sequence is that of Proline--tRNA ligase from Mesoplasma florum (strain ATCC 33453 / NBRC 100688 / NCTC 11704 / L1) (Acholeplasma florum).